Reading from the N-terminus, the 268-residue chain is MERYESLFAQLKERKEGAFVPFVTLGDPGIEQSLKIIDTLIEAGADALELGIPFSDPLADGPTIQNATLRAFAAGVTPAQCFEMLALIRQKHPTIPIGLLMYANLVFNKGIDEFYAQCEKVGVDSVLVADVPVEESAPFRQAALRHNVAPIFICPPNADDDLLRQIASYGRGYTYLLSRAGVTGAENRAALPLNHLVAKLKEYNAAPPLQGFGISAPDQVKAAIDAGAAGAISGSAIVKIIEQHINEPEKMLVALKVFVQPMKAATRS.

Active-site proton acceptor residues include glutamate 49 and aspartate 60.

This sequence belongs to the TrpA family. In terms of assembly, tetramer of two alpha and two beta chains.

The enzyme catalyses (1S,2R)-1-C-(indol-3-yl)glycerol 3-phosphate + L-serine = D-glyceraldehyde 3-phosphate + L-tryptophan + H2O. The protein operates within amino-acid biosynthesis; L-tryptophan biosynthesis; L-tryptophan from chorismate: step 5/5. Functionally, the alpha subunit is responsible for the aldol cleavage of indoleglycerol phosphate to indole and glyceraldehyde 3-phosphate. The chain is Tryptophan synthase alpha chain from Escherichia coli (strain 55989 / EAEC).